The sequence spans 397 residues: Flavohemoprotein A (397 aa).

Residues 2 to 137 (SLSQQSISII…IAQAFIDAEA (136 aa)) form the Globin domain. H84 contacts heme b. Catalysis depends on charge relay system residues Y94 and E136. Residues 150 to 397 (WRDTREFIVD…YEIFGPLTNV (248 aa)) are reductase. Positions 151 to 266 (RDTREFIVDR…SPPAGDYVVD (116 aa)) constitute an FAD-binding FR-type domain. FAD contacts are provided by residues Y189 and 208 to 211 (RHYS). 279-284 (GVGITP) provides a ligand contact to NADP(+). Residue 390 to 393 (IFGP) participates in FAD binding.

This sequence belongs to the globin family. Two-domain flavohemoproteins subfamily. It in the C-terminal section; belongs to the flavoprotein pyridine nucleotide cytochrome reductase family. FAD is required as a cofactor. Requires heme b as cofactor.

Its subcellular location is the cytoplasm. It carries out the reaction 2 nitric oxide + NADPH + 2 O2 = 2 nitrate + NADP(+) + H(+). It catalyses the reaction 2 nitric oxide + NADH + 2 O2 = 2 nitrate + NAD(+) + H(+). Is involved in NO detoxification in an aerobic process, termed nitric oxide dioxygenase (NOD) reaction that utilizes O(2) and NAD(P)H to convert NO to nitrate, which protects the cell from various noxious nitrogen compounds. Therefore, plays a central role in the inducible response to nitrosative stress. Functionally, in the presence of oxygen and NADH, it has NADH oxidase activity, which leads to the generation of superoxide and H(2)O(2). Under anaerobic conditions, it also exhibits nitric oxide reductase and FAD reductase activities. However, all these reactions are much lower than NOD activity. This Dictyostelium discoideum (Social amoeba) protein is Flavohemoprotein A (fhbA).